The sequence spans 1220 residues: ATP-dependent helicase/nuclease subunit A (1220 aa).

The 465-residue stretch at 9-473 (VIWTDDQWKS…IDLSQNFRSR (465 aa)) folds into the UvrD-like helicase ATP-binding domain. 30-37 (AAAGSGKT) contacts ATP. Residues 474-782 (PEVLSTTNYL…RMMTIHASKG (309 aa)) form the UvrD-like helicase C-terminal domain.

This sequence belongs to the helicase family. AddA subfamily. As to quaternary structure, heterodimer of AddA and AddB/RexB. Requires Mg(2+) as cofactor.

The enzyme catalyses Couples ATP hydrolysis with the unwinding of duplex DNA by translocating in the 3'-5' direction.. The catalysed reaction is ATP + H2O = ADP + phosphate + H(+). In terms of biological role, the heterodimer acts as both an ATP-dependent DNA helicase and an ATP-dependent, dual-direction single-stranded exonuclease. Recognizes the chi site generating a DNA molecule suitable for the initiation of homologous recombination. The AddA nuclease domain is required for chi fragment generation; this subunit has the helicase and 3' -&gt; 5' nuclease activities. This chain is ATP-dependent helicase/nuclease subunit A, found in Staphylococcus carnosus (strain TM300).